The chain runs to 173 residues: SPbeta prophage-derived putative HNH homing endonuclease YosQ (173 aa).

Its function is as follows. A possible homing endonuclease, it is entirely encoded within the YosP intron. This Bacillus subtilis (strain 168) protein is SPbeta prophage-derived putative HNH homing endonuclease YosQ (yosQ).